The sequence spans 363 residues: Biotin synthase (363 aa).

The Radical SAM core domain occupies 40–268 (NVVQVSTLLS…ETQVRLSAGR (229 aa)). Cys55, Cys59, and Cys62 together coordinate [4Fe-4S] cluster. [2Fe-2S] cluster contacts are provided by Cys99, Cys131, Cys191, and Arg263.

Belongs to the radical SAM superfamily. Biotin synthase family. As to quaternary structure, homodimer. Requires [4Fe-4S] cluster as cofactor. The cofactor is [2Fe-2S] cluster.

It carries out the reaction (4R,5S)-dethiobiotin + (sulfur carrier)-SH + 2 reduced [2Fe-2S]-[ferredoxin] + 2 S-adenosyl-L-methionine = (sulfur carrier)-H + biotin + 2 5'-deoxyadenosine + 2 L-methionine + 2 oxidized [2Fe-2S]-[ferredoxin]. It functions in the pathway cofactor biosynthesis; biotin biosynthesis; biotin from 7,8-diaminononanoate: step 2/2. In terms of biological role, catalyzes the conversion of dethiobiotin (DTB) to biotin by the insertion of a sulfur atom into dethiobiotin via a radical-based mechanism. The protein is Biotin synthase of Flavobacterium johnsoniae (strain ATCC 17061 / DSM 2064 / JCM 8514 / BCRC 14874 / CCUG 350202 / NBRC 14942 / NCIMB 11054 / UW101) (Cytophaga johnsonae).